Consider the following 228-residue polypeptide: Uracil-DNA glycosylase (228 aa).

Catalysis depends on Asp64, which acts as the Proton acceptor.

This sequence belongs to the uracil-DNA glycosylase (UDG) superfamily. UNG family. As to quaternary structure, monomer.

It is found in the cytoplasm. It carries out the reaction Hydrolyzes single-stranded DNA or mismatched double-stranded DNA and polynucleotides, releasing free uracil.. In terms of biological role, excises uracil residues from the DNA which can arise as a result of misincorporation of dUMP residues by DNA polymerase or due to deamination of cytosine. The protein is Uracil-DNA glycosylase of Escherichia coli O6:H1 (strain CFT073 / ATCC 700928 / UPEC).